A 784-amino-acid polypeptide reads, in one-letter code: LPS-assembly protein LptD (784 aa).

A signal peptide spans 1-24; it reads MKKRIPTLLATMIASALYSHQGLA. Disulfide bonds link Cys31-Cys724 and Cys173-Cys725.

The protein belongs to the LptD family. In terms of assembly, component of the lipopolysaccharide transport and assembly complex. Interacts with LptE and LptA. Contains two intramolecular disulfide bonds.

It localises to the cell outer membrane. Its function is as follows. Together with LptE, is involved in the assembly of lipopolysaccharide (LPS) at the surface of the outer membrane. The chain is LPS-assembly protein LptD from Salmonella paratyphi A (strain ATCC 9150 / SARB42).